Consider the following 307-residue polypeptide: Ribosomal RNA small subunit methyltransferase H (307 aa).

Residues 34–36 (GGH), aspartate 54, phenylalanine 79, aspartate 101, and glutamine 108 contribute to the S-adenosyl-L-methionine site.

This sequence belongs to the methyltransferase superfamily. RsmH family.

It is found in the cytoplasm. The catalysed reaction is cytidine(1402) in 16S rRNA + S-adenosyl-L-methionine = N(4)-methylcytidine(1402) in 16S rRNA + S-adenosyl-L-homocysteine + H(+). Its function is as follows. Specifically methylates the N4 position of cytidine in position 1402 (C1402) of 16S rRNA. The sequence is that of Ribosomal RNA small subunit methyltransferase H from Vesicomyosocius okutanii subsp. Calyptogena okutanii (strain HA).